The following is a 97-amino-acid chain: Small ribosomal subunit protein bS6 (97 aa).

This sequence belongs to the bacterial ribosomal protein bS6 family.

Functionally, binds together with bS18 to 16S ribosomal RNA. The sequence is that of Small ribosomal subunit protein bS6 (rpsF) from Lactococcus lactis subsp. lactis (strain IL1403) (Streptococcus lactis).